We begin with the raw amino-acid sequence, 412 residues long: Putative competence-damage inducible protein (412 aa).

The protein belongs to the CinA family.

The polypeptide is Putative competence-damage inducible protein (Clostridium perfringens (strain SM101 / Type A)).